The primary structure comprises 405 residues: ATP phosphoribosyltransferase regulatory subunit (405 aa).

This sequence belongs to the class-II aminoacyl-tRNA synthetase family. HisZ subfamily. Heteromultimer composed of HisG and HisZ subunits.

It is found in the cytoplasm. It functions in the pathway amino-acid biosynthesis; L-histidine biosynthesis; L-histidine from 5-phospho-alpha-D-ribose 1-diphosphate: step 1/9. Functionally, required for the first step of histidine biosynthesis. May allow the feedback regulation of ATP phosphoribosyltransferase activity by histidine. This chain is ATP phosphoribosyltransferase regulatory subunit, found in Oceanobacillus iheyensis (strain DSM 14371 / CIP 107618 / JCM 11309 / KCTC 3954 / HTE831).